A 510-amino-acid polypeptide reads, in one-letter code: GMP synthase [glutamine-hydrolyzing] (510 aa).

The region spanning 5–195 (PILVVNFGSQ…IYGVCKAEKN (191 aa)) is the Glutamine amidotransferase type-1 domain. The Nucleophile role is filled by cysteine 82. Active-site residues include histidine 169 and glutamate 171. The GMPS ATP-PPase domain occupies 196-385 (WEMGDFIHEK…LGVPEEILRR (190 aa)). An ATP-binding site is contributed by 223–229 (SGGVDST).

Homodimer.

It catalyses the reaction XMP + L-glutamine + ATP + H2O = GMP + L-glutamate + AMP + diphosphate + 2 H(+). The protein operates within purine metabolism; GMP biosynthesis; GMP from XMP (L-Gln route): step 1/1. Catalyzes the synthesis of GMP from XMP. The protein is GMP synthase [glutamine-hydrolyzing] (guaA) of Aquifex aeolicus (strain VF5).